The primary structure comprises 489 residues: Betaine aldehyde dehydrogenase (489 aa).

Residues Thr-26 and Asp-93 each coordinate K(+). 150-152 (GAW) is an NAD(+) binding site. The Charge relay system role is filled by Lys-162. 176 to 179 (KPSE) contributes to the NAD(+) binding site. Ile-180 contacts K(+). 229–232 (GVET) is a binding site for NAD(+). Leu-245 serves as a coordination point for K(+). Glu-251 functions as the Proton acceptor in the catalytic mechanism. NAD(+)-binding residues include Gly-253, Cys-285, and Glu-386. Residue Cys-285 is the Nucleophile of the active site. Cysteine sulfenic acid (-SOH) is present on Cys-285. The K(+) site is built by Lys-456 and Gly-459. Glu-463 serves as the catalytic Charge relay system.

It belongs to the aldehyde dehydrogenase family. In terms of assembly, dimer of dimers. Requires K(+) as cofactor.

It carries out the reaction betaine aldehyde + NAD(+) + H2O = glycine betaine + NADH + 2 H(+). Its pathway is amine and polyamine biosynthesis; betaine biosynthesis via choline pathway; betaine from betaine aldehyde: step 1/1. Its function is as follows. Involved in the biosynthesis of the osmoprotectant glycine betaine. Catalyzes the irreversible oxidation of betaine aldehyde to the corresponding acid. The protein is Betaine aldehyde dehydrogenase of Paraburkholderia phytofirmans (strain DSM 17436 / LMG 22146 / PsJN) (Burkholderia phytofirmans).